A 455-amino-acid chain; its full sequence is Oxysterols receptor LXR-beta (455 aa).

The segment covering 1–10 has biased composition (polar residues); it reads MSTPTTNSVD. The interval 1-53 is disordered; that stretch reads MSTPTTNSVDTPLPGNGPSTPSSSPGGKEDGPEPCPGGADPDVPSTDGADSAS. Positions 1 to 80 are transactivation AF-1; required for ligand-independent transactivation function; sequence MSTPTTNSVD…GPAPKMLGDE (80 aa). Low complexity predominate over residues 14–26; sequence PGNGPSTPSSSPG. A DNA-binding region (nuclear receptor) is located at residues 79 to 156; that stretch reads DELCQVCGDT…AGMREQCVLS (78 aa). NR C4-type zinc fingers lie at residues 82 to 102 and 120 to 144; these read CQVCGDTASGFHYNVLSCEGC and CRGGGTCQMDAFMRRKCQQCRLRKC. The disordered stretch occupies residues 164–210; the sequence is KIRKQQQQQQQQSSPTGPGVSSSSPASGPGASPGGSDGGGQGSGEGE. A compositionally biased stretch (low complexity) spans 168 to 193; sequence QQQQQQQQSSPTGPGVSSSSPASGPG. Gly residues predominate over residues 194–210; it reads ASPGGSDGGGQGSGEGE. The transactivation AF-2; required for ligand-dependent transactivation function; mediates interaction with CCAR2 stretch occupies residues 214-455; sequence LTAAQELMIQ…LLSEIWDVHE (242 aa). The region spanning 217 to 455 is the NR LBD domain; it reads AQELMIQQLV…LLSEIWDVHE (239 aa). Residues K404 and K442 each participate in a glycyl lysine isopeptide (Lys-Gly) (interchain with G-Cter in SUMO2) cross-link.

The protein belongs to the nuclear hormone receptor family. NR1 subfamily. In terms of assembly, forms a heterodimer with RXR. Interacts with CCAR2 (via N-terminus) in a ligand-independent manner. Interacts (when sumoylated) with GPS2; interaction with GPS2 onto hepatic acute phase protein promoters prevents N-Cor corepressor complex dissociation. Interacts with ABCA12 and ABCA1; this interaction is required for ABCA1 localization to the cell surface and is necessary for its normal activity and stability. Post-translationally, sumoylated by SUMO2 at Lys-404 and Lys-442 during the hepatic acute phase response, leading to promote interaction with GPS2 and prevent N-Cor corepressor complex dissociation.

The protein localises to the nucleus. Functionally, nuclear receptor that exhibits a ligand-dependent transcriptional activation activity. Binds preferentially to double-stranded oligonucleotide direct repeats having the consensus half-site sequence 5'-AGGTCA-3' and 4-nt spacing (DR-4). Regulates cholesterol uptake through MYLIP-dependent ubiquitination of LDLR, VLDLR and LRP8; DLDLR and LRP8. Interplays functionally with RORA for the regulation of genes involved in liver metabolism. Induces LPCAT3-dependent phospholipid remodeling in endoplasmic reticulum (ER) membranes of hepatocytes, driving SREBF1 processing and lipogenesis. Via LPCAT3, triggers the incorporation of arachidonate into phosphatidylcholines of ER membranes, increasing membrane dynamics and enabling triacylglycerols transfer to nascent very low-density lipoprotein (VLDL) particles. Via LPCAT3 also counteracts lipid-induced ER stress response and inflammation, likely by modulating SRC kinase membrane compartmentalization and limiting the synthesis of lipid inflammatory mediators. Plays an anti-inflammatory role during the hepatic acute phase response by acting as a corepressor: inhibits the hepatic acute phase response by preventing dissociation of the N-Cor corepressor complex. In Bos taurus (Bovine), this protein is Oxysterols receptor LXR-beta (NR1H2).